The following is a 321-amino-acid chain: Large ribosomal RNA subunit accumulation protein YCED homolog 1, chloroplastic (321 aa).

Residues 1–32 (MSLVCSLSCVAPLPQTKQSRPSFLKLETCTLS) constitute a chloroplast transit peptide.

It belongs to the DUF177 domain family.

The protein resides in the plastid. It localises to the chloroplast stroma. The protein localises to the chloroplast nucleoid. Plays a role in synthesis, processing and/or stability of 23S rRNA. Required for embryogenesis. This is Large ribosomal RNA subunit accumulation protein YCED homolog 1, chloroplastic from Arabidopsis thaliana (Mouse-ear cress).